Consider the following 219-residue polypeptide: Ribosomal RNA small subunit methyltransferase G (219 aa).

Positions 81, 86, and 150 each coordinate S-adenosyl-L-methionine.

It belongs to the methyltransferase superfamily. RNA methyltransferase RsmG family.

It is found in the cytoplasm. It carries out the reaction guanosine(527) in 16S rRNA + S-adenosyl-L-methionine = N(7)-methylguanosine(527) in 16S rRNA + S-adenosyl-L-homocysteine. Specifically methylates the N7 position of guanine in position 527 of 16S rRNA. In Magnetococcus marinus (strain ATCC BAA-1437 / JCM 17883 / MC-1), this protein is Ribosomal RNA small subunit methyltransferase G.